Consider the following 140-residue polypeptide: Large ribosomal subunit protein uL11 (140 aa).

This sequence belongs to the universal ribosomal protein uL11 family. Part of the ribosomal stalk of the 50S ribosomal subunit. Interacts with L10 and the large rRNA to form the base of the stalk. L10 forms an elongated spine to which L12 dimers bind in a sequential fashion forming a multimeric L10(L12)X complex. Post-translationally, one or more lysine residues are methylated.

Its function is as follows. Forms part of the ribosomal stalk which helps the ribosome interact with GTP-bound translation factors. In Nitratidesulfovibrio vulgaris (strain DSM 19637 / Miyazaki F) (Desulfovibrio vulgaris), this protein is Large ribosomal subunit protein uL11.